A 324-amino-acid polypeptide reads, in one-letter code: Pancreas transcription factor 1 subunit alpha (324 aa).

In terms of domain architecture, bHLH spans 160 to 212; the sequence is QLRQAANVRERRRMQSINDAFEGLRSHIPTLPYEKRLSKVDTLRLAIGYINFL. The disordered stretch occupies residues 302 to 324; sequence DPRKLNSKSFDNIENEPPFEFVS.

Component of the pancreas transcription factor 1 complex (PTF1) which is composed of TCF3/p75, TCF12/p64 and PTF1A/p48. TCF3 is responsible for the nuclear import of the p48/p64 complex. Interacts with TCF3 and RBPSUH/RBP-Jkappa. As to expression, expressed in precursors of pancreatic islets, acini and ducts.

It is found in the nucleus. The protein localises to the cytoplasm. In terms of biological role, transcription factor implicated in the cell fate determination in various organs. Binds to the E-box consensus sequence 5'-CANNTG-3'. Plays a role in early and late pancreas development and differentiation. Important for determining whether cells allocated to the pancreatic buds continue towards pancreatic organogenesis or revert back to duodenal fates. May be involved in the maintenance of exocrine pancreas-specific gene expression including ELA1 and amylase. Required for the formation of pancreatic acinar and ductal cells. Plays an important role in cerebellar development. Directly regulated by FOXN4 and RORC during retinal development, FOXN4-PTF1A pathway plays a central role in directing the differentiation of retinal progenitors towards horizontal and amacrine fates. This is Pancreas transcription factor 1 subunit alpha (Ptf1a) from Mus musculus (Mouse).